Consider the following 237-residue polypeptide: NAD-dependent protein deacetylase (237 aa).

The Deacetylase sirtuin-type domain maps to M1–A237. A18, T22, F29, R30, Q95, D98, and H113 together coordinate NAD(+). A nicotinamide-binding site is contributed by F29. Residue D98 coordinates nicotinamide. Catalysis depends on H113, which acts as the Proton acceptor. Residues C121, C124, C140, and C142 each contribute to the Zn(2+) site. NAD(+) is bound by residues S180, S181, N205, and I224.

It belongs to the sirtuin family. Class U subfamily. The cofactor is Zn(2+).

Its subcellular location is the cytoplasm. It catalyses the reaction N(6)-acetyl-L-lysyl-[protein] + NAD(+) + H2O = 2''-O-acetyl-ADP-D-ribose + nicotinamide + L-lysyl-[protein]. Its function is as follows. NAD-dependent protein deacetylase which modulates the activities of several enzymes which are inactive in their acetylated form. The protein is NAD-dependent protein deacetylase of Halalkalibacterium halodurans (strain ATCC BAA-125 / DSM 18197 / FERM 7344 / JCM 9153 / C-125) (Bacillus halodurans).